Reading from the N-terminus, the 393-residue chain is Probable tRNA sulfurtransferase (393 aa).

Positions 61-168 (DEVIESLTRV…GDVINIYSIE (108 aa)) constitute a THUMP domain. Residues 186-187 (LL), 211-212 (YF), arginine 268, glycine 290, and glutamine 299 each bind ATP.

It belongs to the ThiI family.

It localises to the cytoplasm. It catalyses the reaction [ThiI sulfur-carrier protein]-S-sulfanyl-L-cysteine + a uridine in tRNA + 2 reduced [2Fe-2S]-[ferredoxin] + ATP + H(+) = [ThiI sulfur-carrier protein]-L-cysteine + a 4-thiouridine in tRNA + 2 oxidized [2Fe-2S]-[ferredoxin] + AMP + diphosphate. It carries out the reaction [ThiS sulfur-carrier protein]-C-terminal Gly-Gly-AMP + S-sulfanyl-L-cysteinyl-[cysteine desulfurase] + AH2 = [ThiS sulfur-carrier protein]-C-terminal-Gly-aminoethanethioate + L-cysteinyl-[cysteine desulfurase] + A + AMP + 2 H(+). It participates in cofactor biosynthesis; thiamine diphosphate biosynthesis. Catalyzes the ATP-dependent transfer of a sulfur to tRNA to produce 4-thiouridine in position 8 of tRNAs, which functions as a near-UV photosensor. Also catalyzes the transfer of sulfur to the sulfur carrier protein ThiS, forming ThiS-thiocarboxylate. This is a step in the synthesis of thiazole, in the thiamine biosynthesis pathway. The sulfur is donated as persulfide by IscS. This is Probable tRNA sulfurtransferase from Lachnospira eligens (strain ATCC 27750 / DSM 3376 / VPI C15-48 / C15-B4) (Eubacterium eligens).